The primary structure comprises 177 residues: Myosin regulatory light chain 2 (177 aa).

A compositionally biased stretch (basic residues) spans 1–16 (MSRKSGSRSSSKRSKK). A disordered region spans residues 1–24 (MSRKSGSRSSSKRSKKSGGGSNVF). 6 igE-binding epitope regions span residues 13-30 (RSKK…FTQR), 22-48 (NVFD…DKDG), 49-66 (VIGK…GRIA), 58-90 (TFDE…LLNM), 79-99 (PAPI…TGES), and 118-141 (NIDC…QEAD). In terms of domain architecture, EF-hand 1 spans 30-65 (RQVAEFKEGFQLMDRDKDGVIGKTDLRGTFDEIGRI). Ca(2+) contacts are provided by Asp-43, Asp-45, Asp-47, and Asp-54. Positions 135–170 (FSSQEADDALDQMDIDDGGKIDVQGVIQMLTAGGGD) constitute an EF-hand 2 domain.

As to quaternary structure, myosin is a hexamer of 2 heavy chains and 4 light chains. In terms of tissue distribution, expressed in tail muscle (at protein level).

In Penaeus vannamei (Whiteleg shrimp), this protein is Myosin regulatory light chain 2.